The chain runs to 258 residues: Electron transfer flavoprotein beta subunit lysine methyltransferase (258 aa).

It belongs to the methyltransferase superfamily. ETFBKMT family.

It localises to the cytoplasm. Its subcellular location is the mitochondrion matrix. It carries out the reaction L-lysyl-[protein] + 3 S-adenosyl-L-methionine = N(6),N(6),N(6)-trimethyl-L-lysyl-[protein] + 3 S-adenosyl-L-homocysteine + 3 H(+). In terms of biological role, protein-lysine methyltransferase that selectively trimethylates the flavoprotein ETFB in mitochondria. Thereby, may negatively regulate the function of ETFB in electron transfer from Acyl-CoA dehydrogenases to the main respiratory chain. The sequence is that of Electron transfer flavoprotein beta subunit lysine methyltransferase from Danio rerio (Zebrafish).